Consider the following 564-residue polypeptide: Septation ring formation regulator EzrA (564 aa).

Residues 1–4 lie on the Extracellular side of the membrane; sequence MVLY. A helical transmembrane segment spans residues 5–23; that stretch reads IILAIIVIILIAVGVLFYL. At 24–564 the chain is on the cytoplasmic side; sequence RSNKRQIIEK…KHIEEEVIKQ (541 aa). Coiled coils occupy residues 99-138, 190-223, 271-300, 350-435, and 471-550; these read SFNA…YKDN, DGNY…LIRE, LISR…LIEH, VRQF…RRLL, and VKQL…ESVE.

It belongs to the EzrA family.

The protein localises to the cell membrane. Its function is as follows. Negative regulator of FtsZ ring formation; modulates the frequency and position of FtsZ ring formation. Inhibits FtsZ ring formation at polar sites. Interacts either with FtsZ or with one of its binding partners to promote depolymerization. The polypeptide is Septation ring formation regulator EzrA (Staphylococcus aureus (strain NCTC 8325 / PS 47)).